The following is a 363-amino-acid chain: GDP-fucose transporter 1 (363 aa).

The next 8 membrane-spanning stretches (helical) occupy residues 33 to 55, 75 to 97, 110 to 129, 139 to 161, 166 to 184, 194 to 213, 226 to 248, and 263 to 285; these read FLLR…ISMV, VTFY…ATCC, LKVA…MITF, VPFY…YLLL, SFYA…WLGI, SLTG…LNAI, IWRL…MIVL, and AHFW…VTGL.

Belongs to the TPT transporter family. SLC35C subfamily.

It is found in the golgi apparatus membrane. It carries out the reaction GMP(out) + GDP-beta-L-fucose(in) = GMP(in) + GDP-beta-L-fucose(out). Its function is as follows. Antiporter specific for GDP-l-fucose and depending on the concomitant reverse transport of GMP. Involved in GDP-fucose import from the cytoplasm into the Golgi lumen. This chain is GDP-fucose transporter 1 (Slc35c1), found in Mus musculus (Mouse).